A 335-amino-acid chain; its full sequence is Glycerol-3-phosphate dehydrogenase [NAD(P)+] (335 aa).

The NADPH site is built by serine 12, tryptophan 13, histidine 33, arginine 34, and lysine 108. Residues lysine 108, glycine 137, and threonine 139 each coordinate sn-glycerol 3-phosphate. Alanine 141 lines the NADPH pocket. Residues lysine 192, aspartate 245, serine 255, arginine 256, and asparagine 257 each coordinate sn-glycerol 3-phosphate. Lysine 192 (proton acceptor) is an active-site residue. Arginine 256 provides a ligand contact to NADPH. Position 282 (glutamate 282) interacts with NADPH.

Belongs to the NAD-dependent glycerol-3-phosphate dehydrogenase family.

Its subcellular location is the cytoplasm. It catalyses the reaction sn-glycerol 3-phosphate + NAD(+) = dihydroxyacetone phosphate + NADH + H(+). It carries out the reaction sn-glycerol 3-phosphate + NADP(+) = dihydroxyacetone phosphate + NADPH + H(+). The protein operates within membrane lipid metabolism; glycerophospholipid metabolism. In terms of biological role, catalyzes the reduction of the glycolytic intermediate dihydroxyacetone phosphate (DHAP) to sn-glycerol 3-phosphate (G3P), the key precursor for phospholipid synthesis. This chain is Glycerol-3-phosphate dehydrogenase [NAD(P)+], found in Methylococcus capsulatus (strain ATCC 33009 / NCIMB 11132 / Bath).